A 793-amino-acid chain; its full sequence is E3 UFM1-protein ligase 1 (793 aa).

An N-acetylalanine modification is found at A2. Positions 2–200 (ADAWEEIRRL…RGLFSAITRP (199 aa)) are mediates interaction with DDRGK1. Residues 2–212 (ADAWEEIRRL…VNSLISKYGF (211 aa)) are required for E3 UFM1-protein ligase activity. The tract at residues 121–250 (DRLAEEVNDK…KAVFVPDIYS (130 aa)) is involved in CDK5RAP3-binding. The tract at residues 200 to 400 (PTAVNSLISK…NPVHLITEED (201 aa)) is mediates interaction with TRIP4. The tract at residues 407-473 (LESVSTSKKD…SSHTGKKKPE (67 aa)) is disordered. R433 bears the Omega-N-methylarginine mark. Phosphoserine is present on S458. Residues 490–684 (IQDAPEEFIS…QLKVTEDPAL (195 aa)) are mediates interaction with CDK5RAP3. Position 536 is a phosphothreonine (T536).

The protein belongs to the UFL1 family. As to quaternary structure, catalytic component of the UFM1 ribosome E3 ligase (UREL) complex, composed of UFL1, DDRGK1 and CDK5RAP3. Interacts with E2-like enzyme UFC1. Interacts with RELA. Interacts with NBN; promoting recruitment to double-strand breaks following DNA damage. Interacts (when phosphorylated) with YWHAG/14-3-3-gamma; sequestering UFL1 and preventing its association with PDCD1/PD-1 substrate. Post-translationally, ubiquitinated, leading to its degradation by the proteasome. Interaction with CDK5RAP3 protects both proteins against ubiquitination and degradation via the proteasome. In terms of processing, phosphorylation at Thr-536 by AMPK promotes its interaction with YWHAG/14-3-3-gamma, thereby preventing UFL1 association with PDCD1/PD-1 substrate.

It is found in the endoplasmic reticulum membrane. It localises to the cytoplasm. Its subcellular location is the cytosol. The protein localises to the nucleus. The protein resides in the chromosome. Functionally, E3 protein ligase that mediates ufmylation, the covalent attachment of the ubiquitin-like modifier UFM1 to lysine residues on target proteins, and which plays a key role in various processes, such as ribosome recycling, response to DNA damage, interferon response or reticulophagy (also called ER-phagy). Catalyzes ufmylation of many protein, such as CD274/PD-L1, CDK5RAP3, CYB5R3, DDRGK1, EIF6, histone H4, MRE11, P4HB, PDCD1/PD-1, TRIP4, RPN1, RPS20/uS10, RPL10/uL16, RPL26/uL24, SYVN1/HRD1 and TP53/p53. As part of the UREL complex, plays a key role in ribosome recycling by catalyzing mono-ufmylation of RPL26/uL24 subunit of the 60S ribosome. Ufmylation of RPL26/uL24 occurs on free 60S ribosomes following ribosome dissociation: it weakens the junction between post-termination 60S subunits and SEC61 translocons, promoting release and recycling of the large ribosomal subunit from the endoplasmic reticulum membrane. Ufmylation of RPL26/uL24 and subsequent 60S ribosome recycling either take place after normal termination of translation or after ribosome stalling during cotranslational translocation at the endoplasmic reticulum. Involved in reticulophagy in response to endoplasmic reticulum stress by mediating ufmylation of proteins such as CYB5R3 and RPN1, thereby promoting lysosomal degradation of ufmylated proteins. Ufmylation in response to endoplasmic reticulum stress is essential for processes such as hematopoiesis, blood vessel morphogenesis or inflammatory response. Mediates ufmylation of DDRGK1 and CDK5RAP3; the role of these modifications is however unclear: as both DDRGK1 and CDK5RAP3 act as substrate adapters for ufmylation, it is uncertain whether ufmylation of these proteins is, a collateral effect or is required for ufmylation. Acts as a negative regulator of T-cell activation by mediating ufmylation and stabilization of PDCD1/PD-1. Also involved in the response to DNA damage: recruited to double-strand break sites following DNA damage and mediates monoufmylation of histone H4 and ufmylation of MRE11. Mediates ufmylation of TP53/p53, promoting its stability. Catalyzes ufmylation of TRIP4, thereby playing a role in nuclear receptor-mediated transcription. Required for hematopoietic stem cell function and hematopoiesis. The polypeptide is E3 UFM1-protein ligase 1 (Macaca fascicularis (Crab-eating macaque)).